The primary structure comprises 335 residues: 34 kDa spicule matrix protein (335 aa).

The N-terminal stretch at 1–17 (MKGLLLILASLVAIATG) is a signal peptide. The C-type lectin domain occupies 29 to 194 (SGASCYRYFN…ATAMRAFVCE (166 aa)). A disulfide bridge links Cys50 with Cys193. The disordered stretch occupies residues 199 to 335 (QNIPPGQQPG…QEAETDVTGS (137 aa)). Residues 207–310 (PGFGGQQPGF…GGPQRPGMGG (104 aa)) are compositionally biased toward gly residues. Over residues 311–323 (QPNSPNPRFNRPR) the composition is skewed to low complexity.

This sequence belongs to the SM50 family. As to expression, embryo spicule.

The protein resides in the secreted. Major matrix protein of the sea urchin embryo spicule which directs crystal growth in certain orientations and inhibit growth in others. The chain is 34 kDa spicule matrix protein from Lytechinus pictus (Painted sea urchin).